Reading from the N-terminus, the 144-residue chain is Small ribosomal subunit protein eS12y (144 aa).

S2 bears the N-acetylserine mark.

The protein belongs to the eukaryotic ribosomal protein eS12 family.

This chain is Small ribosomal subunit protein eS12y (RPS12C), found in Arabidopsis thaliana (Mouse-ear cress).